The following is a 314-amino-acid chain: Homoserine kinase (314 aa).

ATP is bound at residue 95 to 105 (PHSRGLGSSAA).

Belongs to the GHMP kinase family. Homoserine kinase subfamily.

It localises to the cytoplasm. The enzyme catalyses L-homoserine + ATP = O-phospho-L-homoserine + ADP + H(+). The protein operates within amino-acid biosynthesis; L-threonine biosynthesis; L-threonine from L-aspartate: step 4/5. Catalyzes the ATP-dependent phosphorylation of L-homoserine to L-homoserine phosphate. The polypeptide is Homoserine kinase (Mycobacterium sp. (strain KMS)).